Consider the following 315-residue polypeptide: 3-chlorobenzoate-3,4-dioxygenase reductase subunit (315 aa).

Position 1–103 (1–103 (MVAIDQHDTY…GATTRISAPR (103 aa))) interacts with FMN. The region spanning 7–109 (HDTYSVRVIS…SAPRNAFALD (103 aa)) is the FAD-binding FR-type domain. The region spanning 228–315 (NEFTVNLARS…ALSPELTLDL (88 aa)) is the 2Fe-2S ferredoxin-type domain. Residues Cys264, Cys269, Cys272, and Cys302 each contribute to the [2Fe-2S] cluster site.

The protein belongs to the PDR/VanB family. As to quaternary structure, this dioxygenase system consists of two proteins: phthalate oxygenase and phthalate oxygenase reductase. FMN is required as a cofactor.

This Comamonas testosteroni (Pseudomonas testosteroni) protein is 3-chlorobenzoate-3,4-dioxygenase reductase subunit (cbaB).